The sequence spans 250 residues: UPF0736 protein BPUM_1067 (250 aa).

Belongs to the UPF0736 family.

This chain is UPF0736 protein BPUM_1067, found in Bacillus pumilus (strain SAFR-032).